Consider the following 485-residue polypeptide: Phosphoglucosamine mutase (485 aa).

The Phosphoserine intermediate role is filled by serine 133. The Mg(2+) site is built by serine 133, aspartate 274, aspartate 276, and aspartate 278. Residue serine 133 is modified to Phosphoserine.

The protein belongs to the phosphohexose mutase family. The cofactor is Mg(2+). Activated by phosphorylation.

It carries out the reaction alpha-D-glucosamine 1-phosphate = D-glucosamine 6-phosphate. Functionally, catalyzes the conversion of glucosamine-6-phosphate to glucosamine-1-phosphate. This is Phosphoglucosamine mutase from Crocosphaera subtropica (strain ATCC 51142 / BH68) (Cyanothece sp. (strain ATCC 51142)).